The primary structure comprises 535 residues: Light-independent protochlorophyllide reductase subunit B (535 aa).

Aspartate 36 contacts [4Fe-4S] cluster. Catalysis depends on aspartate 292, which acts as the Proton donor. Residue 428 to 429 participates in substrate binding; the sequence is GL.

The protein belongs to the ChlB/BchB/BchZ family. Protochlorophyllide reductase is composed of three subunits; BchL, BchN and BchB. Forms a heterotetramer of two BchB and two BchN subunits. The cofactor is [4Fe-4S] cluster.

The enzyme catalyses chlorophyllide a + oxidized 2[4Fe-4S]-[ferredoxin] + 2 ADP + 2 phosphate = protochlorophyllide a + reduced 2[4Fe-4S]-[ferredoxin] + 2 ATP + 2 H2O. It participates in porphyrin-containing compound metabolism; bacteriochlorophyll biosynthesis (light-independent). Its function is as follows. Component of the dark-operative protochlorophyllide reductase (DPOR) that uses Mg-ATP and reduced ferredoxin to reduce ring D of protochlorophyllide (Pchlide) to form chlorophyllide a (Chlide). This reaction is light-independent. The NB-protein (BchN-BchB) is the catalytic component of the complex. In Pelodictyon phaeoclathratiforme (strain DSM 5477 / BU-1), this protein is Light-independent protochlorophyllide reductase subunit B.